The chain runs to 261 residues: Cytochrome c oxidase subunit 2 (261 aa).

The Mitochondrial intermembrane portion of the chain corresponds to 1 to 34 (MSFTGIFHFFTNSPCDAAEPWQLGSQDAATPMMQ). A helical membrane pass occupies residues 35–55 (GIIDLHHDIFFFLILILVFVS). Residues 56 to 87 (RILVRALWHFHSKKNPIPQRIVHGTTIEILRT) are Mitochondrial matrix-facing. The chain crosses the membrane as a helical span at residues 88 to 108 (IFPSIIPMFIAIPSFALLYSM). The Mitochondrial intermembrane portion of the chain corresponds to 109–261 (DEVVVDPAMT…NQLIPQTGEA (153 aa)). The Cu cation site is built by His188, Cys223, Glu225, Cys227, and His231. Glu225 contacts Mg(2+).

This sequence belongs to the cytochrome c oxidase subunit 2 family. As to quaternary structure, component of the cytochrome c oxidase (complex IV, CIV), a multisubunit enzyme composed of a catalytic core of 3 subunits and several supernumerary subunits. The complex exists as a monomer or a dimer and forms supercomplexes (SCs) in the inner mitochondrial membrane with ubiquinol-cytochrome c oxidoreductase (cytochrome b-c1 complex, complex III, CIII). It depends on Cu cation as a cofactor.

The protein localises to the mitochondrion inner membrane. It carries out the reaction 4 Fe(II)-[cytochrome c] + O2 + 8 H(+)(in) = 4 Fe(III)-[cytochrome c] + 2 H2O + 4 H(+)(out). Its function is as follows. Component of the cytochrome c oxidase, the last enzyme in the mitochondrial electron transport chain which drives oxidative phosphorylation. The respiratory chain contains 3 multisubunit complexes succinate dehydrogenase (complex II, CII), ubiquinol-cytochrome c oxidoreductase (cytochrome b-c1 complex, complex III, CIII) and cytochrome c oxidase (complex IV, CIV), that cooperate to transfer electrons derived from NADH and succinate to molecular oxygen, creating an electrochemical gradient over the inner membrane that drives transmembrane transport and the ATP synthase. Cytochrome c oxidase is the component of the respiratory chain that catalyzes the reduction of oxygen to water. Electrons originating from reduced cytochrome c in the intermembrane space (IMS) are transferred via the dinuclear copper A center (CU(A)) of subunit 2 and heme A of subunit 1 to the active site in subunit 1, a binuclear center (BNC) formed by heme A3 and copper B (CU(B)). The BNC reduces molecular oxygen to 2 water molecules using 4 electrons from cytochrome c in the IMS and 4 protons from the mitochondrial matrix. This chain is Cytochrome c oxidase subunit 2 (COX2), found in Daucus carota (Wild carrot).